Reading from the N-terminus, the 300-residue chain is MKIFAILGASASGKSALGLRLAKELECFILSLDSLSIYQEINIASAKPSKEELLSIRHFGIDLLTPNEPSNAALFAHLFEEALEASNQAGKKALLLVGGTGFFLKRIIEGLSPAPTLDPSAKEWLKEVLENRREAFKELEKIDPLYTSRITPSDLHRLRRGWEIYLGSGLSPSLFFETHPPKPLGHDLKIYELTLERELLRQRITERTEQMLESGLIDEVCQLESRYTREPQAMKSIGIAETLAYLDGEISKEELTPLISTHTAQLAKRQTTFNKTQFTSIRHLEAPRLFEEICHTITKS.

8–15 contributes to the ATP binding site; sequence GASASGKS. 10-15 contributes to the substrate binding site; the sequence is SASGKS. Positions 33 to 36 are interaction with substrate tRNA; it reads DSLS.

Belongs to the IPP transferase family. As to quaternary structure, monomer. The cofactor is Mg(2+).

It catalyses the reaction adenosine(37) in tRNA + dimethylallyl diphosphate = N(6)-dimethylallyladenosine(37) in tRNA + diphosphate. Its function is as follows. Catalyzes the transfer of a dimethylallyl group onto the adenine at position 37 in tRNAs that read codons beginning with uridine, leading to the formation of N6-(dimethylallyl)adenosine (i(6)A). The sequence is that of tRNA dimethylallyltransferase from Wolinella succinogenes (strain ATCC 29543 / DSM 1740 / CCUG 13145 / JCM 31913 / LMG 7466 / NCTC 11488 / FDC 602W) (Vibrio succinogenes).